A 1192-amino-acid polypeptide reads, in one-letter code: Leucine-rich repeat receptor protein kinase EMS1 (1192 aa).

Positions 1-18 (MAFLTALFLFLFFSFSSS) are cleaved as a signal peptide. N-linked (GlcNAc...) asparagine glycosylation is present at asparagine 47. LRR repeat units lie at residues 64–87 (LGRVNSLSLPSLSLRGQIPKEISS), 90–112 (NLRELCLAGNQFSGKIPPEIWNL), 114–137 (HLQTLDLSGNSLTGLLPRLLSELP), 138–160 (QLLYLDLSDNHFSGSLPPSFFIS), 163–185 (ALSSLDVSNNSLSGEIPPEIGKL), 187–209 (NLSNLYMGLNSFSGQIPSEIGNI), 235–257 (HLAKLDLSYNPLKCSIPKSFGEL), 259–281 (NLSILNLVSAELIGLIPPELGNC), 283–304 (SLKSLMLSFNSLSGPLPLELSE), 330–352 (VLDSLLLANNRFSGEIPHEIEDC), 354–376 (MLKHLSLASNLLSGSIPRELCGS), 378–400 (SLEAIDLSGNLLSGTIEEVFDGC), 402–425 (SLGELLLTNNQINGSIPEDLWKLP), 426–447 (LMALDLDSNNFTGEIPKSLWKS), 449–471 (NLMEFTASYNRLEGYLPAEIGNA), 473–496 (SLKRLVLSDNQLTGEIPREIGKLT), 497–520 (SLSVLNLNANMFQGKIPVELGDCT), 521–543 (SLTTLDLGSNNLQGQIPDKITAL), 545–567 (QLQCLVLSYNNLSGSIPSKPSAY), 581–603 (HHGIFDLSYNRLSGPIPEELGEC), 605–628 (VLVEISLSNNHLSGEIPASLSRLT), 629–651 (NLTILDLSGNALTGSIPKEMGNS), 653–675 (KLQGLNLANNQLNGHIPESFGLL), 677–697 (SLVKLNLTKNKLDGPVPASLG), 701–723 (ELTHMDLSFNNLSGELSSELSTM), 725–748 (KLVGLYIEQNKFTGEIPSELGNLT), 749–772 (QLEYLDVSENLLSGEIPTKICGLP), and 773–795 (NLEFLNLAKNNLRGEVPSDGVCQ). N-linked (GlcNAc...) asparagine glycosylation is found at asparagine 171, asparagine 187, and asparagine 208. Asparagine 259 carries an N-linked (GlcNAc...) asparagine glycan. N-linked (GlcNAc...) asparagine glycosylation is found at asparagine 414 and asparagine 435. A glycan (N-linked (GlcNAc...) asparagine) is linked at asparagine 555. A glycan (N-linked (GlcNAc...) asparagine) is linked at asparagine 629. N-linked (GlcNAc...) asparagine glycosylation is found at asparagine 682, asparagine 711, and asparagine 746. A helical transmembrane segment spans residues 828–848 (WGIAGLMLGFTIIVFVFVFSL). The residue at position 914 (threonine 914) is a Phosphothreonine. The Protein kinase domain occupies 917 to 1192 (FSKKNIIGDG…LDVLKALKEI (276 aa)). Residues 923–931 (IGDGGFGTV) and lysine 945 contribute to the ATP site. Tyrosine 990 carries the phosphotyrosine modification. Catalysis depends on aspartate 1043, which acts as the Proton acceptor. Tyrosine 1085 carries the phosphotyrosine modification.

This sequence belongs to the protein kinase superfamily. Ser/Thr protein kinase family. As to quaternary structure, interacts with TPD1. Post-translationally, autophosphorylates in vitro. Present in young buds, open flowers and siliques but absent from mature leaves and roots. Strongly expressed in the young organ primordia, and as the anthers and ovules developed, became focused in the microsporangia and in the distal and chalazal regions of the ovule. In cv. Landsberg erecta, only expressed in the anthers of young floral buds.

Its subcellular location is the cell membrane. The enzyme catalyses L-seryl-[protein] + ATP = O-phospho-L-seryl-[protein] + ADP + H(+). It carries out the reaction L-threonyl-[protein] + ATP = O-phospho-L-threonyl-[protein] + ADP + H(+). Its function is as follows. Receptor with a serine/threonine-protein kinase activity required for the specification of the correct number of male archesporial initials and for the subsequent specification of tapetal and middle cell layer identities. In seeds, required for enhancing cell size and the rate of embryonic development. The polypeptide is Leucine-rich repeat receptor protein kinase EMS1 (Arabidopsis thaliana (Mouse-ear cress)).